The sequence spans 293 residues: ATP synthase subunit a (293 aa).

8 consecutive transmembrane segments (helical) span residues 39 to 59 (QVFGIFVVFIVLLTLFLVYWI), 73 to 93 (FVLLMQMLFVWAQDTTADLIG), 102 to 122 (YFLMLLLYLVSSNLIGLLGGI), 128 to 148 (SLTFTFSLGLATFLGIVIMGI), 172 to 192 (TLIPNPLSFLGEFAPLFSISL), 198 to 218 (ILGGTLILALFYNFWFFAFST), 224 to 244 (LALSLGAIFAGILTPALHVYF), and 245 to 265 (DVVVGTLQGYVFVMLTYNYWA).

It belongs to the ATPase A chain family. As to quaternary structure, F-type ATPases have 2 components, CF(1) - the catalytic core - and CF(0) - the membrane proton channel. CF(1) has five subunits: alpha(3), beta(3), gamma(1), delta(1), epsilon(1). CF(0) has three main subunits: a(1), b(2) and c(9-12). The alpha and beta chains form an alternating ring which encloses part of the gamma chain. CF(1) is attached to CF(0) by a central stalk formed by the gamma and epsilon chains, while a peripheral stalk is formed by the delta and b chains.

The protein resides in the cell membrane. In terms of biological role, key component of the proton channel; it plays a direct role in the translocation of protons across the membrane. This chain is ATP synthase subunit a, found in Mycoplasma pneumoniae (strain ATCC 29342 / M129 / Subtype 1) (Mycoplasmoides pneumoniae).